The following is a 111-amino-acid chain: Phosphoribosyl-ATP pyrophosphatase (111 aa).

Belongs to the PRA-PH family.

The protein resides in the cytoplasm. The enzyme catalyses 1-(5-phospho-beta-D-ribosyl)-ATP + H2O = 1-(5-phospho-beta-D-ribosyl)-5'-AMP + diphosphate + H(+). Its pathway is amino-acid biosynthesis; L-histidine biosynthesis; L-histidine from 5-phospho-alpha-D-ribose 1-diphosphate: step 2/9. The sequence is that of Phosphoribosyl-ATP pyrophosphatase from Pseudomonas putida (strain ATCC 700007 / DSM 6899 / JCM 31910 / BCRC 17059 / LMG 24140 / F1).